A 385-amino-acid polypeptide reads, in one-letter code: uncharacterized protein (385 aa).

This sequence belongs to the phage portal family. HK97 subfamily.

This is an uncharacterized protein from Rickettsia bellii (strain RML369-C).